Here is a 116-residue protein sequence, read N- to C-terminus: Large ribosomal subunit protein bL19 (116 aa).

It belongs to the bacterial ribosomal protein bL19 family.

This protein is located at the 30S-50S ribosomal subunit interface and may play a role in the structure and function of the aminoacyl-tRNA binding site. This Fusobacterium nucleatum subsp. nucleatum (strain ATCC 25586 / DSM 15643 / BCRC 10681 / CIP 101130 / JCM 8532 / KCTC 2640 / LMG 13131 / VPI 4355) protein is Large ribosomal subunit protein bL19.